Here is a 400-residue protein sequence, read N- to C-terminus: Elongation factor Tu 2 (400 aa).

Positions 10 to 209 constitute a tr-type G domain; that stretch reads KPHVNIGTIG…AVDEYIPTPQ (200 aa). The tract at residues 19 to 26 is G1; sequence GHVDHGKT. 19–26 contacts GTP; sequence GHVDHGKT. Threonine 26 serves as a coordination point for Mg(2+). The interval 60–64 is G2; the sequence is GITIN. The G3 stretch occupies residues 81–84; the sequence is DCPG. GTP-binding positions include 81 to 85 and 136 to 139; these read DCPGH and NKAD. The tract at residues 136-139 is G4; the sequence is NKAD. A G5 region spans residues 174-176; sequence SAL.

This sequence belongs to the TRAFAC class translation factor GTPase superfamily. Classic translation factor GTPase family. EF-Tu/EF-1A subfamily. As to quaternary structure, monomer.

It localises to the cytoplasm. It catalyses the reaction GTP + H2O = GDP + phosphate + H(+). GTP hydrolase that promotes the GTP-dependent binding of aminoacyl-tRNA to the A-site of ribosomes during protein biosynthesis. In Pelotomaculum thermopropionicum (strain DSM 13744 / JCM 10971 / SI), this protein is Elongation factor Tu 2.